The primary structure comprises 301 residues: Probable aspartoacylase (301 aa).

Zn(2+)-binding residues include His13 and Glu16. Substrate is bound by residues Arg54 and 61 to 62 (NR). Position 105 (His105) interacts with Zn(2+). The substrate site is built by Glu163 and Tyr273.

This sequence belongs to the AspA/AstE family. Aspartoacylase subfamily. Zn(2+) serves as cofactor.

The enzyme catalyses an N-acyl-L-aspartate + H2O = a carboxylate + L-aspartate. The protein is Probable aspartoacylase of Prochlorococcus marinus (strain MIT 9301).